Consider the following 79-residue polypeptide: Serine rich endogenous peptide 2 (79 aa).

An N-terminal signal peptide occupies residues 1–19 (MANNLGLVILLLVIVLVSC). The tract at residues 25–79 (CALASPQKSRPSSEWRRKLIPVRSSRSPRSPSFAPKKPPPPPPSPPLSPSSPPSN) is disordered. An SCOOP motif motif is present at residues 45-57 (PVRSSRSPRSPSF). A compositionally biased stretch (low complexity) spans 45–59 (PVRSSRSPRSPSFAP). Positions 49–51 (SRS) match the SxS motif essential for MIK2 binding motif. Pro residues predominate over residues 60–79 (KKPPPPPPSPPLSPSSPPSN).

It belongs to the serine rich endogenous peptide (SCOOP) phytocytokine family. Interacts with MIK2 (via extracellular leucine-rich repeat domain); this interaction triggers the formation of complex between MIK2 and the BAK1/SERK3 and SERK4 coreceptors, and subsequent BAK1 activation by phosphorylation.

Its subcellular location is the cell membrane. It localises to the secreted. The protein localises to the extracellular space. It is found in the apoplast. Its function is as follows. Brassicaceae-specific phytocytokine (plant endogenous peptide released into the apoplast) perceived by MIK2 in a BAK1/SERK3 and SERK4 coreceptors-dependent manner, that modulates various physiological and antimicrobial processes including growth prevention and reactive oxygen species (ROS) response regulation. The protein is Serine rich endogenous peptide 2 of Arabidopsis thaliana (Mouse-ear cress).